The chain runs to 259 residues: Ribosomal RNA large subunit methyltransferase E (259 aa).

S-adenosyl-L-methionine-binding residues include G58, W60, D78, D96, and D120. K160 (proton acceptor) is an active-site residue.

The protein belongs to the class I-like SAM-binding methyltransferase superfamily. RNA methyltransferase RlmE family.

It localises to the cytoplasm. The enzyme catalyses uridine(2552) in 23S rRNA + S-adenosyl-L-methionine = 2'-O-methyluridine(2552) in 23S rRNA + S-adenosyl-L-homocysteine + H(+). In terms of biological role, specifically methylates the uridine in position 2552 of 23S rRNA at the 2'-O position of the ribose in the fully assembled 50S ribosomal subunit. This Methanococcus vannielii (strain ATCC 35089 / DSM 1224 / JCM 13029 / OCM 148 / SB) protein is Ribosomal RNA large subunit methyltransferase E.